The chain runs to 239 residues: ATP synthase subunit a (239 aa).

The next 5 membrane-spanning stretches (helical) occupy residues 17-37 (GTVC…VYFF), 75-95 (FHLL…IGLI), 113-133 (DPFV…LFGV), 182-202 (LLTL…PLAI), and 206-226 (MVWI…FVTL).

Belongs to the ATPase A chain family. F-type ATPases have 2 components, CF(1) - the catalytic core - and CF(0) - the membrane proton channel. CF(1) has five subunits: alpha(3), beta(3), gamma(1), delta(1), epsilon(1). CF(0) has three main subunits: a(1), b(2) and c(9-12). The alpha and beta chains form an alternating ring which encloses part of the gamma chain. CF(1) is attached to CF(0) by a central stalk formed by the gamma and epsilon chains, while a peripheral stalk is formed by the delta and b chains.

The protein resides in the cell membrane. Key component of the proton channel; it plays a direct role in the translocation of protons across the membrane. In Enterococcus hirae (strain ATCC 9790 / DSM 20160 / JCM 8729 / LMG 6399 / NBRC 3181 / NCIMB 6459 / NCDO 1258 / NCTC 12367 / WDCM 00089 / R), this protein is ATP synthase subunit a.